Here is a 249-residue protein sequence, read N- to C-terminus: 2,3-bisphosphoglycerate-dependent phosphoglycerate mutase (249 aa).

Substrate-binding positions include 7–14 (RHGESEWN), 20–21 (TG), Arg59, 86–89 (ERHY), Lys97, 113–114 (RR), and 182–183 (GN). His8 (tele-phosphohistidine intermediate) is an active-site residue. Residue Glu86 is the Proton donor/acceptor of the active site.

This sequence belongs to the phosphoglycerate mutase family. BPG-dependent PGAM subfamily.

It carries out the reaction (2R)-2-phosphoglycerate = (2R)-3-phosphoglycerate. It functions in the pathway carbohydrate degradation; glycolysis; pyruvate from D-glyceraldehyde 3-phosphate: step 3/5. In terms of biological role, catalyzes the interconversion of 2-phosphoglycerate and 3-phosphoglycerate. The sequence is that of 2,3-bisphosphoglycerate-dependent phosphoglycerate mutase from Lachnoclostridium phytofermentans (strain ATCC 700394 / DSM 18823 / ISDg) (Clostridium phytofermentans).